The chain runs to 595 residues: DNA mismatch repair protein MutL (595 aa).

It belongs to the DNA mismatch repair MutL/HexB family.

Functionally, this protein is involved in the repair of mismatches in DNA. It is required for dam-dependent methyl-directed DNA mismatch repair. May act as a 'molecular matchmaker', a protein that promotes the formation of a stable complex between two or more DNA-binding proteins in an ATP-dependent manner without itself being part of a final effector complex. The chain is DNA mismatch repair protein MutL from Endomicrobium trichonymphae.